Here is a 96-residue protein sequence, read N- to C-terminus: Non-specific lipid-transfer protein 2 (96 aa).

The first 27 residues, 1–27 (MMRKLAVLVLAVAMVAACGGGVVGVAG), serve as a signal peptide directing secretion. Intrachain disulfides connect Cys30–Cys62, Cys38–Cys52, Cys53–Cys88, and Cys64–Cys95.

Its function is as follows. Transfer lipids across membranes. May play a role in plant defense or in the biosynthesis of cuticle layers. The sequence is that of Non-specific lipid-transfer protein 2 (LTP-2) from Oryza sativa subsp. japonica (Rice).